We begin with the raw amino-acid sequence, 437 residues long: Enolase 1 (437 aa).

Residue lysine 60 forms a Glycyl lysine isopeptide (Lys-Gly) (interchain with G-Cter in ubiquitin) linkage. A phosphoserine mark is found at serine 119 and serine 138. Substrate is bound by residues histidine 160 and glutamate 169. A Phosphoserine modification is found at serine 188. Glutamate 212 serves as the catalytic Proton donor. Lysine 243 participates in a covalent cross-link: Glycyl lysine isopeptide (Lys-Gly) (interchain with G-Cter in ubiquitin). The Mg(2+) site is built by aspartate 247 and glutamate 296. Glutamate 296 contacts substrate. The residue at position 313 (threonine 313) is a Phosphothreonine. Residue aspartate 321 participates in substrate binding. Position 321 (aspartate 321) interacts with Mg(2+). Phosphothreonine is present on threonine 324. Lysine 346 acts as the Proton acceptor in catalysis. Lysine 358 is covalently cross-linked (Glycyl lysine isopeptide (Lys-Gly) (interchain with G-Cter in ubiquitin)). Substrate is bound by residues 373–376 and lysine 397; that span reads SHRS.

The protein belongs to the enolase family. As to quaternary structure, homodimer. Mg(2+) serves as cofactor.

It localises to the cytoplasm. The catalysed reaction is (2R)-2-phosphoglycerate = phosphoenolpyruvate + H2O. The protein operates within carbohydrate degradation; glycolysis; pyruvate from D-glyceraldehyde 3-phosphate: step 4/5. The polypeptide is Enolase 1 (ENO1) (Saccharomyces cerevisiae (strain ATCC 204508 / S288c) (Baker's yeast)).